The sequence spans 98 residues: NADH-ubiquinone oxidoreductase chain 4L (98 aa).

The next 3 membrane-spanning stretches (helical) occupy residues 1–21, 26–46, and 61–81; these read MNLIDLILIAIYVIGISGLIF, IINILIISELNLGTLGMLFVL, and LYILTFTAAESAIGLAIVVIL.

It belongs to the complex I subunit 4L family.

Its subcellular location is the mitochondrion membrane. The enzyme catalyses a ubiquinone + NADH + 5 H(+)(in) = a ubiquinol + NAD(+) + 4 H(+)(out). Functionally, core subunit of the mitochondrial membrane respiratory chain NADH dehydrogenase (Complex I) that is believed to belong to the minimal assembly required for catalysis. Complex I functions in the transfer of electrons from NADH to the respiratory chain. The immediate electron acceptor for the enzyme is believed to be ubiquinone. The protein is NADH-ubiquinone oxidoreductase chain 4L (nad4L) of Dictyostelium citrinum (Slime mold).